Reading from the N-terminus, the 305-residue chain is Ribonuclease BN (305 aa).

Zn(2+)-binding residues include histidine 64, histidine 66, aspartate 68, histidine 69, histidine 141, aspartate 212, and histidine 270. Catalysis depends on aspartate 68, which acts as the Proton acceptor.

Belongs to the RNase Z family. RNase BN subfamily. Homodimer. The cofactor is Zn(2+).

In terms of biological role, zinc phosphodiesterase, which has both exoribonuclease and endoribonuclease activities. The polypeptide is Ribonuclease BN (Salmonella paratyphi C (strain RKS4594)).